A 674-amino-acid chain; its full sequence is Sterile alpha motif domain-containing protein 15 (674 aa).

A compositionally biased stretch (acidic residues) spans 1 to 18; the sequence is MAEVPEDYDSGPDEDGEL. The segment at 1–448 is disordered; that stretch reads MAEVPEDYDS…LEHREPKRGK (448 aa). Composition is skewed to basic and acidic residues over residues 87 to 142, 195 to 223, and 236 to 274; these read IAKE…EEAK, ESLRVQHEETGLEPPEQTKQDFPSEKLGE, and TKPETPEETQRESTEKKRTEPPEQARLEFLEKEPRKSSE. Residues 276–290 are compositionally biased toward acidic residues; it reads AGLEPPEETQPEVPE. Composition is skewed to basic and acidic residues over residues 291–322, 330–346, 354–372, and 391–429; these read EMQRKATEEKGTELPERTKPDFPDHKPRKSTD, EEIKLEFPEEESRKTNE, EMMKPESPEEIRKSNEKKN, and VEEKTQTKPTEKILELPDETKPRETHVEFSKEDRPEPIK. Residues 545 to 608 form the SAM domain; the sequence is WDPEEVAEWI…SRHTQELLEI (64 aa).

The protein is Sterile alpha motif domain-containing protein 15 (SAMD15) of Homo sapiens (Human).